Reading from the N-terminus, the 212-residue chain is Protein GrpE (212 aa).

The interval Met-1 to Ser-69 is disordered. Over residues Glu-40–Leu-60 the composition is skewed to low complexity.

This sequence belongs to the GrpE family. In terms of assembly, homodimer.

The protein resides in the cytoplasm. In terms of biological role, participates actively in the response to hyperosmotic and heat shock by preventing the aggregation of stress-denatured proteins, in association with DnaK and GrpE. It is the nucleotide exchange factor for DnaK and may function as a thermosensor. Unfolded proteins bind initially to DnaJ; upon interaction with the DnaJ-bound protein, DnaK hydrolyzes its bound ATP, resulting in the formation of a stable complex. GrpE releases ADP from DnaK; ATP binding to DnaK triggers the release of the substrate protein, thus completing the reaction cycle. Several rounds of ATP-dependent interactions between DnaJ, DnaK and GrpE are required for fully efficient folding. This is Protein GrpE from Leptospira interrogans serogroup Icterohaemorrhagiae serovar Lai (strain 56601).